The sequence spans 446 residues: Adenylosuccinate synthetase (446 aa).

Residues 20–26 (GDEGKGK) and 48–50 (GHT) contribute to the GTP site. The active-site Proton acceptor is aspartate 21. Residues aspartate 21 and glycine 48 each coordinate Mg(2+). IMP-binding positions include 21–24 (DEGK), 46–49 (NAGH), threonine 137, arginine 151, glutamine 232, threonine 247, and arginine 319. The active-site Proton donor is histidine 49. Position 315-321 (315-321 (SVTGRPR)) interacts with substrate. Residues arginine 321, 347–349 (KLD), and 429–431 (STG) contribute to the GTP site.

The protein belongs to the adenylosuccinate synthetase family. Homodimer. The cofactor is Mg(2+).

It is found in the cytoplasm. It catalyses the reaction IMP + L-aspartate + GTP = N(6)-(1,2-dicarboxyethyl)-AMP + GDP + phosphate + 2 H(+). Its pathway is purine metabolism; AMP biosynthesis via de novo pathway; AMP from IMP: step 1/2. Its function is as follows. Plays an important role in the de novo pathway of purine nucleotide biosynthesis. Catalyzes the first committed step in the biosynthesis of AMP from IMP. The polypeptide is Adenylosuccinate synthetase (Polynucleobacter necessarius subsp. necessarius (strain STIR1)).